We begin with the raw amino-acid sequence, 518 residues long: Two-component response regulator-like PRR1 (518 aa).

Positions 29–147 constitute a Response regulatory domain; sequence RILLCDSDPS…ELLNLWTHVW (119 aa). Disordered regions lie at residues 172-241, 266-305, and 483-518; these read PSDA…PGVM, TPTT…GTDV, and VRQA…SSPE. A compositionally biased stretch (polar residues) spans 196-212; that stretch reads NQETSTSNQHEYESNPS. The region spanning 443–485 is the CCT domain; sequence RAAALAKFRLKRKERCFDKKVRYVNRKKLAETRPRVRGQFVRQ.

The protein belongs to the ARR-like family. As to quaternary structure, interacts with PIL13. Interacts with PIL15.

The protein localises to the nucleus. Controls photoperiodic flowering response. Seems to be one of the component of the circadian clock. Expression of several members of the ARR-like family is controlled by circadian rhythm. The particular coordinated sequential expression of PRR73, PRR37, PRR95, PRR59 and PPR1 result to circadian waves that may be at the basis of the endogenous circadian clock. This is Two-component response regulator-like PRR1 (PRR1) from Oryza sativa subsp. japonica (Rice).